The following is a 440-amino-acid chain: Deoxyguanosinetriphosphate triphosphohydrolase-like protein (440 aa).

The region spanning 62 to 255 (RLTHSLEAAQ…MELADDIAYG (194 aa)) is the HD domain.

Belongs to the dGTPase family. Type 2 subfamily.

This Vibrio parahaemolyticus serotype O3:K6 (strain RIMD 2210633) protein is Deoxyguanosinetriphosphate triphosphohydrolase-like protein.